The primary structure comprises 126 residues: Small ribosomal subunit protein uS13 (126 aa).

Residues 95-126 are disordered; that stretch reads GLPVRGQRTHTNARTRKGPRKTVAGKKKPGKK.

It belongs to the universal ribosomal protein uS13 family. In terms of assembly, part of the 30S ribosomal subunit. Forms a loose heterodimer with protein S19. Forms two bridges to the 50S subunit in the 70S ribosome.

Its function is as follows. Located at the top of the head of the 30S subunit, it contacts several helices of the 16S rRNA. In the 70S ribosome it contacts the 23S rRNA (bridge B1a) and protein L5 of the 50S subunit (bridge B1b), connecting the 2 subunits; these bridges are implicated in subunit movement. Contacts the tRNAs in the A and P-sites. The polypeptide is Small ribosomal subunit protein uS13 (Acidothermus cellulolyticus (strain ATCC 43068 / DSM 8971 / 11B)).